A 179-amino-acid polypeptide reads, in one-letter code: ATP synthase subunit delta (179 aa).

The protein belongs to the ATPase delta chain family. F-type ATPases have 2 components, F(1) - the catalytic core - and F(0) - the membrane proton channel. F(1) has five subunits: alpha(3), beta(3), gamma(1), delta(1), epsilon(1). F(0) has three main subunits: a(1), b(2) and c(10-14). The alpha and beta chains form an alternating ring which encloses part of the gamma chain. F(1) is attached to F(0) by a central stalk formed by the gamma and epsilon chains, while a peripheral stalk is formed by the delta and b chains.

It is found in the cell membrane. F(1)F(0) ATP synthase produces ATP from ADP in the presence of a proton or sodium gradient. F-type ATPases consist of two structural domains, F(1) containing the extramembraneous catalytic core and F(0) containing the membrane proton channel, linked together by a central stalk and a peripheral stalk. During catalysis, ATP synthesis in the catalytic domain of F(1) is coupled via a rotary mechanism of the central stalk subunits to proton translocation. Its function is as follows. This protein is part of the stalk that links CF(0) to CF(1). It either transmits conformational changes from CF(0) to CF(1) or is implicated in proton conduction. This is ATP synthase subunit delta from Listeria monocytogenes serovar 1/2a (strain ATCC BAA-679 / EGD-e).